A 534-amino-acid polypeptide reads, in one-letter code: MSWESPVNYSVGGEDLDLDLGAFLGSLSDFDGQIEPAHSLEDEYSGQSGQGADDDPDSDGPKVLTIMASIDAIHRHLENERKKGNGKANVAIKLKDPTMRKSITFSIPELQSPTTTASSAGSPSCAPLRLPSPEAFDLGEAIFSHPTAGSSFPEEVTPAAEDDVLSSIASPFATPEGLFFPQDEDVLPSIAPLLKAANLAHATEPSLGLISPRATASESSMMPDEEAMADVVQYRDGTGTTPESLSPGDMEQDEWPHTVSSRQTRSRQAARACQTPSTMSTKDKKCIDSSSCSLKQMNSQHQKRNSIETAPSRTIKRPRVESPDLLTLIPNHDEYQRVQELTAALDPLLAYKMVRNARAILPQSVAEDMAHSADMEVDGPLHYQNNQQSPSSQEEIMQQFCETVRRIEWVERAAFKSMVEYRVLFVQLYQHYLRLQEIVVTRKGERRVTLAKEQLYRTLYPGVEKMTSSGLTSDEWEKFNRCIRRGKQWNTIASKLGVGILQRMPSSICHSWVEQKLQTKEQLHIWIEIVSLLA.

3 disordered regions span residues 34 to 61, 110 to 130, and 236 to 287; these read IEPAHSLEDEYSGQSGQGADDDPDSDGP, LQSPTTTASSAGSPSCAPLRL, and DGTG…KKCI. Low complexity-rich tracts occupy residues 112 to 127 and 258 to 275; these read SPTTTASSAGSPSCAP and TVSSRQTRSRQAARACQT.

It functions in the pathway secondary metabolite biosynthesis. Part of the gene cluster that mediates the biosynthesis of hypothemycin, a resorcylic acid lactone (RAL) that irreversibly inhibits a subset of protein kinases with a conserved cysteine in the ATP binding site such as human ERK2. The first step is performed by both PKSs hmp3 and hmp8 and leads to the production of 7',8'-dehydrozearalenol (DHZ). The highly reducing PKS hpm8 synthesizes the reduced hexaketide (7S,11S,2E,8E)-7,11-dihydroxy-dodeca-2,8-dienoate, which is transferred downstream to the non-reducing PKS hpm3. Hpm3 then extends the reduced hexaketide to a nonaketide, after which regioselective cyclization and macrolactonization affords DHZ. The next step is the conversion of DHZ into aigialomycin C and is performed by the O-methyltransferase hmp5, the FAD-binding monooxygenase hmp7, and the cytochrome P450 monooxygenase hmp1. The wide substrate tolerance of the hmp5 and hmp7 implies that the reactions from DHZ to aigialomycin C can occur in any order. The steps from aigialomycin C to hypothemycin are less well established. The FAD-linked oxidoreductase hmp9 presumably catalyzes oxidation of the C-6' hydroxyl to a ketone. The timing of this oxidation is important, since the resulting enone functional group is a Michael acceptor that can react spontaneously with glutathione, an abundant metabolite in fungal cells. The glutathione S-transferase hmp2 catalyzes cis-trans isomerization of the 7',8' double bond with equilibrium favoring the trans isomer. The hpm6-encoded transporter might preferentially pump hypothemycin out of the cell relative to the trans isomer aigialomycin A. The cis-to-trans isomerization may be coupled with C-4' hydroxylation, since all known hypothemycin analogs containing the enone functional group also have hydroxyl groups at both C-4' and C-5'. The polypeptide is Hypothemycin biosynthesis cluster protein hpm4 (Hypomyces subiculosus (Nectria subiculosa)).